The chain runs to 416 residues: Tryptophan synthase beta chain (416 aa).

At K109 the chain carries N6-(pyridoxal phosphate)lysine.

Belongs to the TrpB family. Tetramer of two alpha and two beta chains. Requires pyridoxal 5'-phosphate as cofactor.

The catalysed reaction is (1S,2R)-1-C-(indol-3-yl)glycerol 3-phosphate + L-serine = D-glyceraldehyde 3-phosphate + L-tryptophan + H2O. It functions in the pathway amino-acid biosynthesis; L-tryptophan biosynthesis; L-tryptophan from chorismate: step 5/5. Functionally, the beta subunit is responsible for the synthesis of L-tryptophan from indole and L-serine. The polypeptide is Tryptophan synthase beta chain (Prochlorococcus marinus (strain SARG / CCMP1375 / SS120)).